We begin with the raw amino-acid sequence, 526 residues long: MVEEHKNKKRRQEDGPADVPEKKVKVSKSEKKDKKEKKEKKEKKEKKEKKEKKEKKEKKEKKKKYEHTATISGSAQSSQGYTQSESLTNLPQSEIDSFLATNEVTIEDPHSLNLRPLLSFDQIQLNSKISAVVNKFPTPTPIQSVAWPYLLSGKDVIGVAETGSGKTFAFGVPAINNILTLGKSGLSVLCISPTRELASQIYDNLVDLTSNTNVKCVCVYGGVPKHDQVKNLKNANVVVATPGRLLDLIEDGAVNLGTVDYLVLDEADRMLETGFEDAIKAIIGGTKKENRQTLMFTATWPQEVRKLASTFMNQPVKVSIGDRDELAANKRITQIVEVIEPFDKEKKLLGLLRQYQSGSKKNDKVLIFALYKKEATRIEGLLRRNSYNVAAIHGDLSQQQRTNALNSFKKGESSLLLATDVAARGLDIPNVKVVINLTFPLTVEDYVHRIGRTGRAGQTGTAHTLFTEHEKHLSGALMNILRGANQPVPDELLKFGGHTKKKAHSAYGAFFKDVDMTKTAKKIKFD.

Residues 1-33 (MVEEHKNKKRRQEDGPADVPEKKVKVSKSEKKD) are compositionally biased toward basic and acidic residues. The interval 1 to 86 (MVEEHKNKKR…SSQGYTQSES (86 aa)) is disordered. Basic residues predominate over residues 34–65 (KKEKKEKKEKKEKKEKKEKKEKKEKKEKKKKY). Over residues 69–86 (ATISGSAQSSQGYTQSES) the composition is skewed to polar residues. The Q motif signature appears at 118–144 (LSFDQIQLNSKISAVVNKFPTPTPIQS). Residues 147-318 (WPYLLSGKDV…STFMNQPVKV (172 aa)) enclose the Helicase ATP-binding domain. Position 160 to 167 (160 to 167 (AETGSGKT)) interacts with ATP. Positions 265 to 268 (DEAD) match the DEAD box motif. Residues 334–496 (QIVEVIEPFD…PVPDELLKFG (163 aa)) enclose the Helicase C-terminal domain.

This sequence belongs to the DEAD box helicase family. DDX5/DBP2 subfamily.

It localises to the nucleus. The protein localises to the nucleolus. The catalysed reaction is ATP + H2O = ADP + phosphate + H(+). Its function is as follows. ATP-dependent RNA helicase required for 60S ribosomal subunit synthesis. Involved in efficient pre-rRNA processing, predominantly at site A3, which is necessary for the normal formation of 25S and 5.8S rRNAs. The sequence is that of ATP-dependent RNA helicase DBP3 (DBP3) from Scheffersomyces stipitis (strain ATCC 58785 / CBS 6054 / NBRC 10063 / NRRL Y-11545) (Yeast).